Consider the following 90-residue polypeptide: U7-theraphotoxin-Hhn1a 6 (90 aa).

An N-terminal signal peptide occupies residues 1 to 19 (MKTAIFTVVLALAVFAVLS). A propeptide spanning residues 20–50 (FGWEANEKALSEEFTELIHEKEAASEAEARE) is cleaved from the precursor. Disulfide bonds link Cys51-Cys65, Cys58-Cys70, and Cys64-Cys81.

Belongs to the neurotoxin 10 (Hwtx-1) family. 13 (Hntx-13) subfamily. In terms of tissue distribution, expressed by the venom gland.

It is found in the secreted. In terms of biological role, ion channel inhibitor. The chain is U7-theraphotoxin-Hhn1a 6 from Cyriopagopus hainanus (Chinese bird spider).